The primary structure comprises 115 residues: MDDDEELERIRRQQLESMQRQAMQEQMREEQEKQREAERARRQQILRQILDPSARERLNNVRLVRPDLADNVENQLIQLASMGRINRMLSERDIIDILSKLTENKREPKIERRSK.

The segment at methionine 1–arginine 41 is disordered. Over residues leucine 15–glutamate 25 the composition is skewed to low complexity. Positions glutamine 26–arginine 41 are enriched in basic and acidic residues.

It belongs to the PDCD5 family.

The sequence is that of DNA-binding protein Ta0052 from Thermoplasma acidophilum (strain ATCC 25905 / DSM 1728 / JCM 9062 / NBRC 15155 / AMRC-C165).